Consider the following 304-residue polypeptide: Bifunctional protein FolD (304 aa).

NADP(+) is bound by residues 176–178, isoleucine 201, and isoleucine 242; that span reads GAS.

It belongs to the tetrahydrofolate dehydrogenase/cyclohydrolase family. As to quaternary structure, homodimer.

It carries out the reaction (6R)-5,10-methylene-5,6,7,8-tetrahydrofolate + NADP(+) = (6R)-5,10-methenyltetrahydrofolate + NADPH. The catalysed reaction is (6R)-5,10-methenyltetrahydrofolate + H2O = (6R)-10-formyltetrahydrofolate + H(+). It functions in the pathway one-carbon metabolism; tetrahydrofolate interconversion. In terms of biological role, catalyzes the oxidation of 5,10-methylenetetrahydrofolate to 5,10-methenyltetrahydrofolate and then the hydrolysis of 5,10-methenyltetrahydrofolate to 10-formyltetrahydrofolate. This is Bifunctional protein FolD from Gluconobacter oxydans (strain 621H) (Gluconobacter suboxydans).